We begin with the raw amino-acid sequence, 268 residues long: MVLTRRIIPCLDLKDGRVVKGTNFLGLRDAGDPVELAGRYNEQGADEVVFLDITASKEKRGIIIELIQRAADQLFLPLTVGGGLRTLDDIQQILRAGADKVSLNTSAVHDPSIITKGAESFGTQCIVVAMDVRRNFTLNPEAVPVRLCDGTTCWYEVVIYGGSKPTGIDAVRWAKEAEERGAGEILLTSMETDGTKNGFDIAVTRAISEAANIPVIASGGVGTLEHFYEGFTRGKADACLAASVFHYGEMSVRDVKEYLKGKGIPVRL.

Residues Asp-12 and Asp-131 contribute to the active site.

Belongs to the HisA/HisF family. As to quaternary structure, heterodimer of HisH and HisF.

It localises to the cytoplasm. It catalyses the reaction 5-[(5-phospho-1-deoxy-D-ribulos-1-ylimino)methylamino]-1-(5-phospho-beta-D-ribosyl)imidazole-4-carboxamide + L-glutamine = D-erythro-1-(imidazol-4-yl)glycerol 3-phosphate + 5-amino-1-(5-phospho-beta-D-ribosyl)imidazole-4-carboxamide + L-glutamate + H(+). It functions in the pathway amino-acid biosynthesis; L-histidine biosynthesis; L-histidine from 5-phospho-alpha-D-ribose 1-diphosphate: step 5/9. Its function is as follows. IGPS catalyzes the conversion of PRFAR and glutamine to IGP, AICAR and glutamate. The HisF subunit catalyzes the cyclization activity that produces IGP and AICAR from PRFAR using the ammonia provided by the HisH subunit. In Methanoregula boonei (strain DSM 21154 / JCM 14090 / 6A8), this protein is Imidazole glycerol phosphate synthase subunit HisF.